The sequence spans 189 residues: Leucine repeat adapter protein 25 (189 aa).

Serine 28 carries the post-translational modification Phosphoserine. A disordered region spans residues 54 to 83; that stretch reads ELSRAARAPDGPRHAAGAANAGPAAGPRRP. The span at 67-83 shows a compositional bias: low complexity; it reads HAAGAANAGPAAGPRRP. One copy of the LRR repeat lies at 86 to 114; the sequence is LDSALAALRKEMVGLRQLDMSLLCQLWGL. The disordered stretch occupies residues 141-175; sequence DSSYPPDAGLSDDEEPPDASLPPDPPPLTVPQTHN. The span at 159–169 shows a compositional bias: pro residues; that stretch reads ASLPPDPPPLT. Residue serine 188 is modified to Phosphoserine.

It belongs to the FAM89 family. In terms of assembly, interacts with SKI. Interacts (via LRR repeat) with CDC42BPA (via AGC-kinase C-terminal domain), CDC42BPB (via AGC-kinase C-terminal domain) and LIMK1 (via LIM zinc-binding domains). Forms a tripartite complex with CDC42BPA, CDC42BPB and LIMK1.

Its subcellular location is the cytoplasm. It is found in the cell projection. The protein resides in the lamellipodium. Functionally, negatively regulates TGF-beta-induced signaling; in cooperation with SKI prevents the translocation of SMAD2 from the nucleus to the cytoplasm in response to TGF-beta. Acts as an adapter that mediates the specific recognition of LIMK1 by CDC42BPA and CDC42BPB in the lamellipodia. LRAP25-mediated CDC42BPA/CDC42BPB targeting to LIMK1 and the lamellipodium results in LIMK1 activation and the subsequent phosphorylation of CFL1 which is important for lamellipodial F-actin regulation. This is Leucine repeat adapter protein 25 (FAM89B) from Homo sapiens (Human).